The primary structure comprises 215 residues: ATP-dependent Clp protease proteolytic subunit 1 (215 aa).

Serine 108 (nucleophile) is an active-site residue. The active site involves histidine 133.

This sequence belongs to the peptidase S14 family. In terms of assembly, fourteen ClpP subunits assemble into 2 heptameric rings which stack back to back to give a disk-like structure with a central cavity, resembling the structure of eukaryotic proteasomes.

Its subcellular location is the cytoplasm. The catalysed reaction is Hydrolysis of proteins to small peptides in the presence of ATP and magnesium. alpha-casein is the usual test substrate. In the absence of ATP, only oligopeptides shorter than five residues are hydrolyzed (such as succinyl-Leu-Tyr-|-NHMec, and Leu-Tyr-Leu-|-Tyr-Trp, in which cleavage of the -Tyr-|-Leu- and -Tyr-|-Trp bonds also occurs).. In terms of biological role, cleaves peptides in various proteins in a process that requires ATP hydrolysis. Has a chymotrypsin-like activity. Plays a major role in the degradation of misfolded proteins. This Paraburkholderia xenovorans (strain LB400) protein is ATP-dependent Clp protease proteolytic subunit 1.